A 308-amino-acid polypeptide reads, in one-letter code: tRNA dimethylallyltransferase (308 aa).

Gly-8 to Thr-15 serves as a coordination point for ATP. Residue Thr-10–Thr-15 participates in substrate binding. The tract at residues Asp-33–Gln-36 is interaction with substrate tRNA.

It belongs to the IPP transferase family. Monomer. Mg(2+) is required as a cofactor.

The enzyme catalyses adenosine(37) in tRNA + dimethylallyl diphosphate = N(6)-dimethylallyladenosine(37) in tRNA + diphosphate. Catalyzes the transfer of a dimethylallyl group onto the adenine at position 37 in tRNAs that read codons beginning with uridine, leading to the formation of N6-(dimethylallyl)adenosine (i(6)A). This Kosmotoga olearia (strain ATCC BAA-1733 / DSM 21960 / TBF 19.5.1) protein is tRNA dimethylallyltransferase.